Reading from the N-terminus, the 380-residue chain is Cytochrome b (380 aa).

4 helical membrane-spanning segments follow: residues 34–54, 78–99, 114–134, and 179–199; these read FGSL…LLAM, WLIR…FLHI, WNTG…GYVL, and FFAL…IHLI. Residues H84 and H98 each contribute to the heme b site. Residues H183 and H197 each contribute to the heme b site. H202 contacts a ubiquinone. Transmembrane regions (helical) follow at residues 227-247, 289-309, 321-341, and 348-368; these read LKDI…ALFS, LGGV…PFLH, LSQT…WVGS, and FIII…ILFP.

This sequence belongs to the cytochrome b family. The cytochrome bc1 complex contains 11 subunits: 3 respiratory subunits (MT-CYB, CYC1 and UQCRFS1), 2 core proteins (UQCRC1 and UQCRC2) and 6 low-molecular weight proteins (UQCRH/QCR6, UQCRB/QCR7, UQCRQ/QCR8, UQCR10/QCR9, UQCR11/QCR10 and a cleavage product of UQCRFS1). This cytochrome bc1 complex then forms a dimer. Requires heme b as cofactor.

It localises to the mitochondrion inner membrane. Component of the ubiquinol-cytochrome c reductase complex (complex III or cytochrome b-c1 complex) that is part of the mitochondrial respiratory chain. The b-c1 complex mediates electron transfer from ubiquinol to cytochrome c. Contributes to the generation of a proton gradient across the mitochondrial membrane that is then used for ATP synthesis. This chain is Cytochrome b (MT-CYB), found in Tragopan temminckii (Temminck's tragopan).